Consider the following 487-residue polypeptide: Serine/threonine-protein kinase 4 (487 aa).

An N-acetylmethionine modification is found at Met1. A Phosphothreonine modification is found at Thr3. Positions 30-281 (FDVLEKLGEG…ATQLLQHPFV (252 aa)) constitute a Protein kinase domain. ATP-binding positions include 36-44 (LGEGSYGSV) and Lys59. The active-site Proton acceptor is the Asp149. The residue at position 183 (Thr183) is a Phosphothreonine; by autocatalysis. Ser265 bears the Phosphoserine mark. Residues 290–310 (LRDLINEAMDVKLKRQESQQR) are a coiled coil. Positions 303–312 (KRQESQQREV) are enriched in basic and acidic residues. Residues 303–332 (KRQESQQREVDQDDEENSEEDEMDSGTMVR) form a disordered region. A compositionally biased stretch (acidic residues) spans 313–326 (DQDDEENSEEDEMD). The residue at position 320 (Ser320) is a Phosphoserine. Thr340 and Thr367 each carry phosphothreonine. Thr387 carries the phosphothreonine; by PKB/AKT1 modification. A phosphoserine mark is found at Ser410 and Ser414. Tyr433 is modified (phosphotyrosine). The SARAH domain maps to 433 to 480 (YEFLKSWTVEDLQKRLLALDPMMEQEIEEIRQKYQSKRQPILDAIEAK).

This sequence belongs to the protein kinase superfamily. STE Ser/Thr protein kinase family. STE20 subfamily. As to quaternary structure, homodimer; mediated via the coiled-coil region. Interacts with NORE1, which inhibits autoactivation. Interacts with and stabilizes SAV1. Interacts with RASSF1. Interacts with FOXO3. Interacts with RASSF2 (via SARAH domain). Interacts with AR, PKB/AKT1, TNNI3 and SIRT1. Interacts with DLG5 (via PDZ domain 3). Interacts with MARK3 and SCRIB in the presence of DLG5. Mg(2+) is required as a cofactor. Post-translationally, autophosphorylated on serine and threonine residues. Phosphorylation at Thr-387 by PKB/AKT1, leads to inhibition of its: kinase activity, nuclear translocation and autophosphorylation at Thr-183. It also diminishes its cleavage by caspases and its ability to phosphorylate FOXO3. Proteolytically cleaved by caspase-3 during apoptosis at Asp-326 and Asp-349 resulting in a 37 kDa or a 39 kDa subunit respectively. The 39 kDa subunit is further cleaved into the 37 kDa form. Proteolytic cleavage results in kinase activation and nuclear translocation of the truncated form (MST1/N). It is less likely that cleavage at Asp-349 is a prerequisite for activation as this site is not conserved in the murine ortholog.

The protein resides in the cytoplasm. It localises to the nucleus. It carries out the reaction L-seryl-[protein] + ATP = O-phospho-L-seryl-[protein] + ADP + H(+). The catalysed reaction is L-threonyl-[protein] + ATP = O-phospho-L-threonyl-[protein] + ADP + H(+). Inhibited by the C-terminal non-catalytic region. Activated by caspase-cleavage. Full activation also requires homodimerization and autophosphorylation of Thr-183. Activated by RASSF1 which acts by preventing its dephosphorylation. Stress-activated, pro-apoptotic kinase which, following caspase-cleavage, enters the nucleus and induces chromatin condensation followed by internucleosomal DNA fragmentation. Key component of the Hippo signaling pathway which plays a pivotal role in organ size control and tumor suppression by restricting proliferation and promoting apoptosis. The core of this pathway is composed of a kinase cascade wherein STK3/MST2 and STK4/MST1, in complex with its regulatory protein SAV1, phosphorylates and activates LATS1/2 in complex with its regulatory protein MOB1, which in turn phosphorylates and inactivates YAP1 oncoprotein and WWTR1/TAZ. Phosphorylation of YAP1 by LATS2 inhibits its translocation into the nucleus to regulate cellular genes important for cell proliferation, cell death, and cell migration. STK3/MST2 and STK4/MST1 are required to repress proliferation of mature hepatocytes, to prevent activation of facultative adult liver stem cells (oval cells), and to inhibit tumor formation. Phosphorylates 'Ser-14' of histone H2B (H2BS14ph) during apoptosis. Phosphorylates FOXO3 upon oxidative stress, which results in its nuclear translocation and cell death initiation. Phosphorylates MOBKL1A, MOBKL1B and RASSF2. Phosphorylates TNNI3 (cardiac Tn-I) and alters its binding affinity to TNNC1 (cardiac Tn-C) and TNNT2 (cardiac Tn-T). Phosphorylates FOXO1 on 'Ser-212' and regulates its activation and stimulates transcription of PMAIP1 in a FOXO1-dependent manner. Phosphorylates SIRT1 and inhibits SIRT1-mediated p53/TP53 deacetylation, thereby promoting p53/TP53 dependent transcription and apoptosis upon DNA damage. Acts as an inhibitor of PKB/AKT1. Phosphorylates AR on 'Ser-650' and suppresses its activity by intersecting with PKB/AKT1 signaling and antagonizing formation of AR-chromatin complexes. This is Serine/threonine-protein kinase 4 (STK4) from Chlorocebus aethiops (Green monkey).